The sequence spans 101 residues: UPF0060 membrane protein ACIAD1364 (101 aa).

Helical transmembrane passes span 24–44 (WLWL…TLHP), 50–70 (IYAA…RFID), and 79–99 (IWGG…PQGL).

This sequence belongs to the UPF0060 family.

The protein localises to the cell inner membrane. The chain is UPF0060 membrane protein ACIAD1364 from Acinetobacter baylyi (strain ATCC 33305 / BD413 / ADP1).